A 594-amino-acid polypeptide reads, in one-letter code: MHEHLKEKLAILPDQPGCYLMKDKQGTVIYVGKAKVLKNRVRSYFTGSHDGKTLRLVGEIVDFEYIVTSSNLEALILELNLIKKHDPKYNIQLKDDKTYPFIKITAEKQPRLLITRNVKKDKGKYFGPYPNAQSAHETKKLLDRMYPLRKCSNMPDKVCLYYHMGQCLAPCVKEVTEEQNKEIVDEIIKFLNGGHKEVRSELETKMYEASEKLEFERAKELRDQIAHIDAIMEKQKMIMSDLVDRDVFGYAVDKGWMCVQVFFVRKGKLIERDVSMFPIYDEPEEGFLTFIGQFYENSSHFKPKEIVVPGSIDSELVERFLEVEATQPKRGKKKDLVELANKNAKIALEEKFYLIERDEERTIKAVENLGKQLGIETPYRIEAFDNSNIQGTNPVSAMIAFIDGKPAKKEYRKYKIKTVQGPDDYESMREVVRRRYTRALKEGLPLPDLIIIDGGKGHLAAASDVLENELGLYIPMAGLVKDDKHKTSHLIIGDPPEPVMLERNSQEFYLLQRVQDEVHRFAITFHRQLHGKSVIQSALDDIPGIGDKRKKVLLKHFGSLKKMKEASIEEFVEAGMPKNVAETIYTYLTDKKTL.

Residues 14-91 form the GIY-YIG domain; it reads DQPGCYLMKD…IKKHDPKYNI (78 aa). A UVR domain is found at 196–231; it reads KEVRSELETKMYEASEKLEFERAKELRDQIAHIDAI.

It belongs to the UvrC family. As to quaternary structure, interacts with UvrB in an incision complex.

Its subcellular location is the cytoplasm. The UvrABC repair system catalyzes the recognition and processing of DNA lesions. UvrC both incises the 5' and 3' sides of the lesion. The N-terminal half is responsible for the 3' incision and the C-terminal half is responsible for the 5' incision. The chain is UvrABC system protein C from Bacillus thuringiensis (strain Al Hakam).